Here is a 181-residue protein sequence, read N- to C-terminus: tRNA-splicing endonuclease (181 aa).

Active-site residues include tyrosine 118, histidine 126, and lysine 157.

Belongs to the tRNA-intron endonuclease family. Archaeal short subfamily. In terms of assembly, homotetramer; although the tetramer contains four active sites, only two participate in the cleavage. Therefore, it should be considered as a dimer of dimers.

It carries out the reaction pretRNA = a 3'-half-tRNA molecule with a 5'-OH end + a 5'-half-tRNA molecule with a 2',3'-cyclic phosphate end + an intron with a 2',3'-cyclic phosphate and a 5'-hydroxyl terminus.. Endonuclease that removes tRNA introns. Cleaves pre-tRNA at the 5'- and 3'-splice sites to release the intron. The products are an intron and two tRNA half-molecules bearing 2',3' cyclic phosphate and 5'-OH termini. Recognizes a pseudosymmetric substrate in which 2 bulged loops of 3 bases are separated by a stem of 4 bp. This Hyperthermus butylicus (strain DSM 5456 / JCM 9403 / PLM1-5) protein is tRNA-splicing endonuclease.